The chain runs to 623 residues: (-)-alpha-pinene synthase 1, chloroplastic (623 aa).

The transit peptide at 1–52 directs the protein to the chloroplast; it reads MDLISVLPSASKSCVCLHKPLSSSTHKLKPFCKTIRILGMPRRWKFAGPSMS. Mg(2+) contacts are provided by Asp374, Asp378, and Asp526. The DDXXD motif signature appears at 374 to 378; it reads DDMYD.

It belongs to the terpene synthase family. Tpsd subfamily. Requires Mg(2+) as cofactor. The cofactor is Mn(2+).

It localises to the plastid. The protein localises to the chloroplast. The catalysed reaction is (2E)-geranyl diphosphate = (1S,5S)-alpha-pinene + diphosphate. It catalyses the reaction (2E)-geranyl diphosphate = (1S,5S)-beta-pinene + diphosphate. It carries out the reaction (2E)-geranyl diphosphate = (-)-beta-phellandrene + diphosphate. Its pathway is terpene metabolism; oleoresin biosynthesis. It functions in the pathway secondary metabolite biosynthesis; terpenoid biosynthesis. Its function is as follows. Monoterpene synthase (TPS) involved in the biosynthesis of monoterpene natural products included in conifer oleoresin secretions and volatile emissions; these compounds contribute to biotic and abiotic stress defense against herbivores and pathogens. Catalyzes the conversion of (2E)-geranyl diphosphate (GPP) to (-)-alpha-pinene and (-)-beta-pinene, and, to a lower extent, to (-)-beta-phellandrene. This chain is (-)-alpha-pinene synthase 1, chloroplastic, found in Pinus banksiana (Jack pine).